Consider the following 405-residue polypeptide: Phosphopentomutase (405 aa).

6 residues coordinate Mn(2+): D10, D305, H310, D346, H347, and H358.

Belongs to the phosphopentomutase family. Mn(2+) serves as cofactor.

Its subcellular location is the cytoplasm. It catalyses the reaction 2-deoxy-alpha-D-ribose 1-phosphate = 2-deoxy-D-ribose 5-phosphate. The enzyme catalyses alpha-D-ribose 1-phosphate = D-ribose 5-phosphate. It functions in the pathway carbohydrate degradation; 2-deoxy-D-ribose 1-phosphate degradation; D-glyceraldehyde 3-phosphate and acetaldehyde from 2-deoxy-alpha-D-ribose 1-phosphate: step 1/2. Its function is as follows. Isomerase that catalyzes the conversion of deoxy-ribose 1-phosphate (dRib-1-P) and ribose 1-phosphate (Rib-1-P) to deoxy-ribose 5-phosphate (dRib-5-P) and ribose 5-phosphate (Rib-5-P), respectively. This chain is Phosphopentomutase, found in Methylobacterium sp. (strain 4-46).